The primary structure comprises 54 residues: Ovomucoid (54 aa).

The 51-residue stretch at 4 to 54 (VDCSDYPKPACTLEYMPLCGSDNKTYGNRCNFCNAVVDSNGTLTLSHFGKC) folds into the Kazal-like domain. 3 disulfides stabilise this stretch: C6/C36, C14/C33, and C22/C54. N-linked (GlcNAc...) asparagine glycosylation is present at N43.

It is found in the secreted. This Dendrocygna viduata (White-faced whistling-duck) protein is Ovomucoid.